Here is a 257-residue protein sequence, read N- to C-terminus: UPF0246 protein Sbal223_3241 (257 aa).

It belongs to the UPF0246 family.

The polypeptide is UPF0246 protein Sbal223_3241 (Shewanella baltica (strain OS223)).